We begin with the raw amino-acid sequence, 372 residues long: DNA-directed RNA polymerase subunit alpha (372 aa).

Residues M1–D268 form an alpha N-terminal domain (alpha-NTD) region. The interval K280 to E372 is alpha C-terminal domain (alpha-CTD).

The protein belongs to the RNA polymerase alpha chain family. In terms of assembly, homodimer. The RNAP catalytic core consists of 2 alpha, 1 beta, 1 beta' and 1 omega subunit. When a sigma factor is associated with the core the holoenzyme is formed, which can initiate transcription.

The catalysed reaction is RNA(n) + a ribonucleoside 5'-triphosphate = RNA(n+1) + diphosphate. Functionally, DNA-dependent RNA polymerase catalyzes the transcription of DNA into RNA using the four ribonucleoside triphosphates as substrates. This is DNA-directed RNA polymerase subunit alpha from Ehrlichia canis (strain Jake).